Reading from the N-terminus, the 85-residue chain is Large ribosomal subunit protein bL27 (85 aa).

A disordered region spans residues 1-22; sequence MAHKKGASSTRNGRDSNAQRLG. A compositionally biased stretch (polar residues) spans 7–19; the sequence is ASSTRNGRDSNAQ.

This sequence belongs to the bacterial ribosomal protein bL27 family.

This is Large ribosomal subunit protein bL27 (rpmA) from Streptomyces griseus.